The following is a 117-amino-acid chain: MTRIRRGYIARRRRTKIRLFASSFRGAHSRLTRTIIQQKIRALVSAHRDRDRQKRNFRRLWVTRINAVIRESTVSYSYSRLINNLYKRQLLLNRKILAQIAILNRNCLYMISNDILK.

It belongs to the bacterial ribosomal protein bL20 family.

It is found in the plastid. Its subcellular location is the chloroplast. Binds directly to 23S ribosomal RNA and is necessary for the in vitro assembly process of the 50S ribosomal subunit. It is not involved in the protein synthesizing functions of that subunit. The chain is Large ribosomal subunit protein bL20c from Manihot esculenta (Cassava).